The following is a 117-amino-acid chain: DNA-binding protein DDB_G0278111 (117 aa).

The segment at 1–40 (MSSEKEIQQQLSQMQGQGFDPEAQQRQEAQRQEANERRQG) is disordered. Residues 8-22 (QQQLSQMQGQGFDPE) are compositionally biased toward low complexity. A compositionally biased stretch (basic and acidic residues) spans 23 to 39 (AQQRQEAQRQEANERRQ).

The protein belongs to the PDCD5 family.

The protein is DNA-binding protein DDB_G0278111 of Dictyostelium discoideum (Social amoeba).